The chain runs to 590 residues: MDTIEPIKICKKMYYSADELKEKCPIFFKGYRNSWSLINADVVDEQCYIFAKYEDGKWIKSTSQSKKFNKVFLLDYWVESNIPEFNSNLEYEITQAPDILKLKNSEKFKDDKGNIIDIEVRGNKNDSECYFLVKDVASGFYIKRLFSILLNFNSGYEIKTHYVYFNIIKQKNDKTIVKKELFLTHLGFVRLIHRSRINNVKYKKTVHRWLSQFKSKTPEKFVLNIEKMSKESRIGFTYLVSSPLLNAVKIGAWRSTLISLRSRYITGYGEDLSLFAIKTADAFALEKKCHKHFTKHKLTNELYDKQHYNEYVIFPKKNKEDYDIELESDIDKSESDIDDSESDIDSENDIDSESDIDDSETDDEEELENPIKTLSSFQYCKNEATDIFGNIKIISDTVDFYLCVSDVEKLIGNKNNYNQDSLIFVKKNYGKELYIKYVGLLEFVFTTNSTKESIVKLRKWMCNTLNTVQMGTKSQKNQLIASMTGVSPEAIKAVFSKTSSTLPCIYFFTIGKVKDLRKSLKISKDYDDEDIIGKYGMTKDLDRRTGEHNDTYGQLPGSDFRLTVFNFIDVQYMSQAETDLKLYMKDTILI.

The disordered stretch occupies residues 330-368 (IDKSESDIDDSESDIDSENDIDSESDIDDSETDDEEELE). A compositionally biased stretch (acidic residues) spans 336 to 368 (DIDDSESDIDSENDIDSESDIDDSETDDEEELE).

This sequence belongs to the mimivirus L5 family.

This is an uncharacterized protein from Acanthamoeba polyphaga mimivirus (APMV).